The chain runs to 284 residues: Cell division protein DivIB (284 aa).

The segment covering 1-10 (MAWLRKKEQQ) has biased composition (basic and acidic residues). Positions 1-38 (MAWLRKKEQQSDPLTPWQQYQARQQQTPRHDRRQKPKL) are disordered. Topologically, residues 1-56 (MAWLRKKEQQSDPLTPWQQYQARQQQTPRHDRRQKPKLDVNLPKIQTLRRRKLVKN) are cytoplasmic. The helical transmembrane segment at 57–77 (LVLILLPLLLLLGVFGYFASP) threads the bilayer. Over 78 to 284 (LSKVGLVSVQ…YSSSEKSSND (207 aa)) the chain is Extracellular. The 72-residue stretch at 79-150 (SKVGLVSVQG…NRIIIKTSEY (72 aa)) folds into the POTRA domain.

This sequence belongs to the FtsQ/DivIB family. DivIB subfamily.

The protein localises to the cell membrane. Functionally, cell division protein that may be involved in stabilizing or promoting the assembly of the division complex. In Lacticaseibacillus rhamnosus (strain ATCC 53103 / LMG 18243 / GG) (Lactobacillus rhamnosus), this protein is Cell division protein DivIB.